Consider the following 113-residue polypeptide: Large ribosomal subunit protein bL17 (113 aa).

It belongs to the bacterial ribosomal protein bL17 family. Part of the 50S ribosomal subunit. Contacts protein L32.

This Clostridium tetani (strain Massachusetts / E88) protein is Large ribosomal subunit protein bL17.